We begin with the raw amino-acid sequence, 147 residues long: uncharacterized protein (147 aa).

Residues 44–147 (LVGYIDKEIH…LKSIKERLSI (104 aa)) enclose the HTH LytTR-type domain.

It is found in the cytoplasm. This is an uncharacterized protein from Staphylococcus aureus (strain Mu50 / ATCC 700699).